The chain runs to 313 residues: Short-chain dehydrogenase/reductase family 9C member 7 (313 aa).

29 to 53 (FITGCDSGFGNLLAKQLVDRGMKVL) is a binding site for NADP(+). S160 contributes to the substrate binding site. Y172 acts as the Proton acceptor in catalysis. Residue S185 is modified to Phosphoserine.

Belongs to the short-chain dehydrogenases/reductases (SDR) family. In terms of tissue distribution, highly expressed in liver.

It localises to the cytoplasm. The catalysed reaction is a N-[omega-(9R,10R)-epoxy-(13R)-hydroxy-(11E)-octadecenoyloxy]acyl-beta-D-glucosyl-(1&lt;-&gt;1)-sphing-4E-enine + NAD(+) = a N-[omega-(9R,10R)-epoxy-13-oxo-(11E)-octadecenoyloxy]acyl-beta-D-glucosyl-(1&lt;-&gt;1)-sphing-4E-enine + NADH + H(+). The enzyme catalyses a N-[omega-(9R,10R)-epoxy-(13R)-hydroxy-(11E)-octadecenoyloxy]-acylsphing-4E-enine + NAD(+) = a N-[omega-(9R,10R)-epoxy-13-oxo-(11E)-octadecenoyloxy]-acylsphing-4E-enine + NADH + H(+). Plays a crucial role in the formation of the epidermal permeability barrier. Catalyzes the NAD+-dependent dehydrogenation of the linoleate 9,10-trans-epoxy-11E-13-alcohol esterified in omega-O-acylceramides (such as in N-[omega-(9R,10R)-epoxy-(13R)-hydroxy-(11E)-octadecenoyloxy]-acylsphing-4E-enine) to the corresponding 13-ketone, the reactive moiety required for binding of epidermal ceramides to proteins. Displays weak conversion of all-trans-retinal to all-trans-retinol in the presence of NADH. Has apparently no steroid dehydrogenase activity. In Mus musculus (Mouse), this protein is Short-chain dehydrogenase/reductase family 9C member 7 (Sdr9c7).